Reading from the N-terminus, the 398-residue chain is Enoyl-[acyl-carrier-protein] reductase [NADH] (398 aa).

NAD(+)-binding positions include 48–53 (GASTGY), 74–75 (FE), 111–112 (DA), and 139–140 (LA). Y225 contributes to the substrate binding site. The Proton donor role is filled by Y235. Residues K244 and 273-275 (VVT) contribute to the NAD(+) site.

This sequence belongs to the TER reductase family. As to quaternary structure, monomer.

The enzyme catalyses a 2,3-saturated acyl-[ACP] + NAD(+) = a (2E)-enoyl-[ACP] + NADH + H(+). Its pathway is lipid metabolism; fatty acid biosynthesis. Its function is as follows. Involved in the final reduction of the elongation cycle of fatty acid synthesis (FAS II). Catalyzes the reduction of a carbon-carbon double bond in an enoyl moiety that is covalently linked to an acyl carrier protein (ACP). In Paraburkholderia phytofirmans (strain DSM 17436 / LMG 22146 / PsJN) (Burkholderia phytofirmans), this protein is Enoyl-[acyl-carrier-protein] reductase [NADH].